The following is a 185-amino-acid chain: Ribosome-recycling factor (185 aa).

Belongs to the RRF family.

Its subcellular location is the cytoplasm. Responsible for the release of ribosomes from messenger RNA at the termination of protein biosynthesis. May increase the efficiency of translation by recycling ribosomes from one round of translation to another. The polypeptide is Ribosome-recycling factor (Campylobacter jejuni subsp. doylei (strain ATCC BAA-1458 / RM4099 / 269.97)).